Reading from the N-terminus, the 63-residue chain is Large ribosomal subunit protein bL32 (63 aa).

Residues 1-22 form a disordered region; it reads MANPKAKMSKSRRDKRRAQFNA. Residues 7–18 show a composition bias toward basic residues; the sequence is KMSKSRRDKRRA.

This sequence belongs to the bacterial ribosomal protein bL32 family.

This Chlorobium limicola (strain DSM 245 / NBRC 103803 / 6330) protein is Large ribosomal subunit protein bL32.